A 336-amino-acid chain; its full sequence is Large ribosomal subunit protein mL39 (336 aa).

A TGS domain is found at 60 to 126 (EKIEVKHVGK…TKSCEIKFLT (67 aa)). At K123 the chain carries N6-acetyllysine.

It belongs to the mitochondrion-specific ribosomal protein mL39 family. In terms of assembly, component of the mitochondrial ribosome large subunit (39S) which comprises a 16S rRNA and about 50 distinct proteins.

The protein resides in the mitochondrion. The polypeptide is Large ribosomal subunit protein mL39 (Mrpl39) (Mus musculus (Mouse)).